A 255-amino-acid chain; its full sequence is Hydroxyacylglutathione hydrolase (255 aa).

The Zn(2+) site is built by histidine 52, histidine 54, aspartate 56, histidine 57, histidine 108, aspartate 130, and histidine 168.

Belongs to the metallo-beta-lactamase superfamily. Glyoxalase II family. Monomer. It depends on Zn(2+) as a cofactor.

It catalyses the reaction an S-(2-hydroxyacyl)glutathione + H2O = a 2-hydroxy carboxylate + glutathione + H(+). The protein operates within secondary metabolite metabolism; methylglyoxal degradation; (R)-lactate from methylglyoxal: step 2/2. In terms of biological role, thiolesterase that catalyzes the hydrolysis of S-D-lactoyl-glutathione to form glutathione and D-lactic acid. The sequence is that of Hydroxyacylglutathione hydrolase from Albidiferax ferrireducens (strain ATCC BAA-621 / DSM 15236 / T118) (Rhodoferax ferrireducens).